Reading from the N-terminus, the 151-residue chain is UPF0561 protein C2orf68 homolog (151 aa).

A disordered region spans residues methionine 1 to glycine 89. Basic and acidic residues-rich tracts occupy residues leucine 32–glutamate 46 and arginine 70–proline 85.

Belongs to the UPF0561 family.

This chain is UPF0561 protein C2orf68 homolog, found in Xenopus laevis (African clawed frog).